Reading from the N-terminus, the 242-residue chain is Glucosamine-6-phosphate deaminase (242 aa).

The active-site Proton acceptor; for enolization step is the Asp-67. The active-site For ring-opening step is Asn-137. His-139 serves as the catalytic Proton acceptor; for ring-opening step. Glu-144 (for ring-opening step) is an active-site residue.

Belongs to the glucosamine/galactosamine-6-phosphate isomerase family. NagB subfamily.

It carries out the reaction alpha-D-glucosamine 6-phosphate + H2O = beta-D-fructose 6-phosphate + NH4(+). The protein operates within amino-sugar metabolism; N-acetylneuraminate degradation; D-fructose 6-phosphate from N-acetylneuraminate: step 5/5. Catalyzes the reversible isomerization-deamination of glucosamine 6-phosphate (GlcN6P) to form fructose 6-phosphate (Fru6P) and ammonium ion. This is Glucosamine-6-phosphate deaminase from Staphylococcus haemolyticus (strain JCSC1435).